The sequence spans 401 residues: MADPKYADLPGIARNEPDVYETSDLPEDDQAEFDAEELTSTSVEHIIVNPNAAYDKFKDKRVGTKGLDFSDRIGKTKRTGYESGEYEMLGEGLGVKETPQQKYQRLLHEVQELTTEVEKIKTTVKESATEEKLTPVLLAKQLAALKQQLVASHLEKLLGPDAAINLTDPDGALAKRLLLQLEATKNSKGGSGGKTTGTPPDSSLVTYELHSRPEQDKFSQAAKVAELEKRLTELETAVRCDQDAQNPLSAGLQGACLMETVELLQAKVSALDLAVLDQVEARLQSVLGKVNEIAKHKASVEDADTQSKVHQLYETIQRWSPIASTLPELVQRLVTIKQLHEQAMQFGQLLTHLDTTQQMIANSLKDNTTLLTQVQTTMRENLATVEGNFASIDERMKKLGK.

The disordered stretch occupies residues 1 to 25 (MADPKYADLPGIARNEPDVYETSDL). Alanine 2 is modified (N-acetylalanine). Phosphotyrosine is present on tyrosine 6. Serine 83 bears the Phosphoserine mark. Position 86 is a phosphotyrosine (tyrosine 86). Residues 99–132 (PQQKYQRLLHEVQELTTEVEKIKTTVKESATEEK) are a coiled coil. Phosphothreonine occurs at positions 134 and 198. The stretch at 214 to 244 (EQDKFSQAAKVAELEKRLTELETAVRCDQDA) forms a coiled coil. Serine 320 bears the Phosphoserine mark. The stretch at 379 to 399 (RENLATVEGNFASIDERMKKL) forms a coiled coil.

The protein belongs to the dynactin subunit 2 family. In terms of assembly, subunit of dynactin, a multiprotein complex part of a tripartite complex with dynein and a adapter, such as BICDL1, BICD2 or HOOK3. The dynactin complex is built around ACTR1A/ACTB filament and consists of an actin-related filament composed of a shoulder domain, a pointed end and a barbed end. Its length is defined by its flexible shoulder domain. The soulder is composed of 2 DCTN1 subunits, 4 DCTN2 and 2 DCTN3. The 4 DCNT2 (via N-terminus) bind the ACTR1A filament and act as molecular rulers to determine the length. The pointed end is important for binding dynein-dynactin cargo adapters and consists of 4 subunits: ACTR10, DCNT4, DCTN5 and DCTN6. The barbed end is composed of a CAPZA1:CAPZB heterodimers, which binds ACTR1A/ACTB filament and dynactin and stabilizes dynactin. Interacts with BICD2 and CEP135. Interacts with DYNAP. Interacts with ECPAS. Interacts with MAPRE1.

Its subcellular location is the cytoplasm. It is found in the cytoskeleton. The protein resides in the microtubule organizing center. The protein localises to the centrosome. It localises to the membrane. In terms of biological role, part of the dynactin complex that activates the molecular motor dynein for ultra-processive transport along microtubules. In the dynactin soulder domain, binds the ACTR1A filament and acts as a molecular ruler to determine the length. Modulates cytoplasmic dynein binding to an organelle, and plays a role in prometaphase chromosome alignment and spindle organization during mitosis. Involved in anchoring microtubules to centrosomes. May play a role in synapse formation during brain development. The protein is Dynactin subunit 2 of Homo sapiens (Human).